Reading from the N-terminus, the 279-residue chain is Pantothenate synthetase (279 aa).

Residue 31–38 (MGNLHGGH) coordinates ATP. Catalysis depends on His38, which acts as the Proton donor. Gln62 lines the (R)-pantoate pocket. Position 62 (Gln62) interacts with beta-alanine. Residue 150 to 153 (GRKD) participates in ATP binding. Gln156 provides a ligand contact to (R)-pantoate. ATP-binding positions include Val179 and 187–190 (KSSR).

Belongs to the pantothenate synthetase family. In terms of assembly, homodimer.

It localises to the cytoplasm. It catalyses the reaction (R)-pantoate + beta-alanine + ATP = (R)-pantothenate + AMP + diphosphate + H(+). The protein operates within cofactor biosynthesis; (R)-pantothenate biosynthesis; (R)-pantothenate from (R)-pantoate and beta-alanine: step 1/1. Catalyzes the condensation of pantoate with beta-alanine in an ATP-dependent reaction via a pantoyl-adenylate intermediate. The polypeptide is Pantothenate synthetase (Stenotrophomonas maltophilia (strain R551-3)).